The chain runs to 260 residues: Type III pantothenate kinase (260 aa).

D6–V13 contributes to the ATP binding site. G108–R111 lines the substrate pocket. D110 serves as the catalytic Proton acceptor. D130 serves as a coordination point for K(+). Position 133 (T133) interacts with ATP. T185 serves as a coordination point for substrate.

The protein belongs to the type III pantothenate kinase family. As to quaternary structure, homodimer. The cofactor is NH4(+). Requires K(+) as cofactor.

The protein localises to the cytoplasm. It catalyses the reaction (R)-pantothenate + ATP = (R)-4'-phosphopantothenate + ADP + H(+). Its pathway is cofactor biosynthesis; coenzyme A biosynthesis; CoA from (R)-pantothenate: step 1/5. Functionally, catalyzes the phosphorylation of pantothenate (Pan), the first step in CoA biosynthesis. This chain is Type III pantothenate kinase, found in Paramagnetospirillum magneticum (strain ATCC 700264 / AMB-1) (Magnetospirillum magneticum).